The following is a 233-amino-acid chain: Orotidine 5'-phosphate decarboxylase (233 aa).

Residues Asp-13, Lys-35, Asp-62–Thr-71, Thr-122, Arg-182, Gln-191, Gly-211, and Arg-212 contribute to the substrate site. The active-site Proton donor is the Lys-64.

This sequence belongs to the OMP decarboxylase family. Type 1 subfamily. Homodimer.

It catalyses the reaction orotidine 5'-phosphate + H(+) = UMP + CO2. Its pathway is pyrimidine metabolism; UMP biosynthesis via de novo pathway; UMP from orotate: step 2/2. Catalyzes the decarboxylation of orotidine 5'-monophosphate (OMP) to uridine 5'-monophosphate (UMP). In Pseudomonas putida (strain W619), this protein is Orotidine 5'-phosphate decarboxylase.